The chain runs to 352 residues: Dihydrorhizobitoxine desaturase (352 aa).

The next 3 membrane-spanning stretches (helical) occupy residues 53–73, 89–109, and 204–224; these read LATL…IGAY, LAKN…YPLF, and IGIL…LFWI.

Belongs to the fatty acid desaturase type 1 family.

It is found in the cell inner membrane. It carries out the reaction dihydrorhizobitoxine + 2 reduced [2Fe-2S]-[ferredoxin] + O2 + 2 H(+) = rhizobitoxine + 2 oxidized [2Fe-2S]-[ferredoxin] + 2 H2O. Functionally, involved in the biosynthesis of the nodulation enhancer compound rhizobitoxine. Catalyzes the final step of the pathway, the introduction of a carbon double bond into the C3 position of dihydrorhizobitoxine to produce rhizobitoxine. This Bradyrhizobium elkanii protein is Dihydrorhizobitoxine desaturase.